We begin with the raw amino-acid sequence, 414 residues long: Putative transporter YoaB (414 aa).

Residues 1–11 (MLDKIGIPKRL) are Cytoplasmic-facing. A helical transmembrane segment spans residues 12–32 (AWGFLGVVLFMMGDGLEQGWL). The Extracellular segment spans residues 33 to 47 (SPFLIENGLTVQQSA). A helical membrane pass occupies residues 48-68 (SIFSIYGIALAIASWFSGVCL). Over 69–75 (EAFGAKR) the chain is Cytoplasmic. Residues 76–96 (TMFMGLLFYVIGTAAFIVFGF) form a helical membrane-spanning segment. The Extracellular portion of the chain corresponds to 97–107 (EQLNLPVMYVT). The helical transmembrane segment at 108–128 (YFVKGLGYPLFAYSFLTWVIY) threads the bilayer. At 129 to 136 (RTPQSKLS) the chain is on the cytoplasmic side. Residues 137–157 (TAVGWFWIAYCLGMFVFGAWY) traverse the membrane as a helical segment. Residues 158–167 (SSYAIKAFGY) are Extracellular-facing. Residues 168-188 (LNTLWSSIFWVCLGAFFALFI) form a helical membrane-spanning segment. The Cytoplasmic portion of the chain corresponds to 189–219 (NKDRFEKKKRKRSETAEELLKGVTILFTNPR). The chain crosses the membrane as a helical span at residues 220–240 (VLTGGIIRIINSIGTYGFPVF). Residues 241 to 255 (LPMHMAQHGISTNVW) lie on the Extracellular side of the membrane. A helical membrane pass occupies residues 256–276 (LQIWGTIFLGNIVFNLIFGIV). Residues 277 to 286 (GDKFGWKNTV) are Cytoplasmic-facing. Residues 287 to 307 (IWFGGVGCGIFTVLLYYAPVF) form a helical membrane-spanning segment. At 308-316 (SGGSLAVVS) the chain is on the extracellular side. A helical transmembrane segment spans residues 317 to 337 (VIGFIWGGLLAGYVPIGAIVP). Topologically, residues 338–343 (TVAGKD) are cytoplasmic. Residues 344-364 (KGAAMSVLNLAAGLSAFVGPA) traverse the membrane as a helical segment. Residues 365 to 375 (LAWLFIGLVGA) are Extracellular-facing. Residues 376–398 (QGVVWIFAALYLASAVLTKCIHI) traverse the membrane as a helical segment. At 399-414 (PEEKAVKEETSPQYAS) the chain is on the cytoplasmic side.

Belongs to the major facilitator superfamily. Sugar transporter (TC 2.A.1.1) family. CsbX subfamily.

The protein resides in the cell membrane. This is Putative transporter YoaB (yoaB) from Bacillus subtilis (strain 168).